The sequence spans 398 residues: Succinate--CoA ligase [ADP-forming] subunit beta (398 aa).

The ATP-grasp domain maps to 9–253; that stretch reads MALLNERGVS…AGASDPLEQE (245 aa). ATP is bound by residues lysine 46, 53-55, valine 111, and glutamate 116; that span reads GRG. Mg(2+) contacts are provided by asparagine 208 and aspartate 222. Residues asparagine 273 and 330–332 contribute to the substrate site; that span reads GIM.

Belongs to the succinate/malate CoA ligase beta subunit family. In terms of assembly, heterotetramer of two alpha and two beta subunits. It depends on Mg(2+) as a cofactor.

The enzyme catalyses succinate + ATP + CoA = succinyl-CoA + ADP + phosphate. It carries out the reaction GTP + succinate + CoA = succinyl-CoA + GDP + phosphate. It participates in carbohydrate metabolism; tricarboxylic acid cycle; succinate from succinyl-CoA (ligase route): step 1/1. Functionally, succinyl-CoA synthetase functions in the citric acid cycle (TCA), coupling the hydrolysis of succinyl-CoA to the synthesis of either ATP or GTP and thus represents the only step of substrate-level phosphorylation in the TCA. The beta subunit provides nucleotide specificity of the enzyme and binds the substrate succinate, while the binding sites for coenzyme A and phosphate are found in the alpha subunit. This Zymomonas mobilis subsp. mobilis (strain ATCC 31821 / ZM4 / CP4) protein is Succinate--CoA ligase [ADP-forming] subunit beta.